A 141-amino-acid polypeptide reads, in one-letter code: Large ribosomal subunit protein uL11 (141 aa).

Belongs to the universal ribosomal protein uL11 family. Part of the ribosomal stalk of the 50S ribosomal subunit. Interacts with L10 and the large rRNA to form the base of the stalk. L10 forms an elongated spine to which L12 dimers bind in a sequential fashion forming a multimeric L10(L12)X complex. In terms of processing, one or more lysine residues are methylated.

Functionally, forms part of the ribosomal stalk which helps the ribosome interact with GTP-bound translation factors. The chain is Large ribosomal subunit protein uL11 from Campylobacter fetus subsp. fetus (strain 82-40).